Reading from the N-terminus, the 277-residue chain is Large ribosomal subunit protein uL2 (277 aa).

3 disordered regions span residues 1-20 (MGIR…SVSD), 27-55 (TQPE…RHRG), and 207-277 (KAGR…RNQS). Residues 27 to 48 (TQPEKSLTTYKHSSQGRNNRGV) show a composition bias toward polar residues. Composition is skewed to basic residues over residues 207-220 (KAGR…RPHV) and 259-277 (TRNR…RNQS).

It belongs to the universal ribosomal protein uL2 family. As to quaternary structure, part of the 50S ribosomal subunit. Forms a bridge to the 30S subunit in the 70S ribosome.

Functionally, one of the primary rRNA binding proteins. Required for association of the 30S and 50S subunits to form the 70S ribosome, for tRNA binding and peptide bond formation. It has been suggested to have peptidyltransferase activity; this is somewhat controversial. Makes several contacts with the 16S rRNA in the 70S ribosome. The protein is Large ribosomal subunit protein uL2 of Gloeothece citriformis (strain PCC 7424) (Cyanothece sp. (strain PCC 7424)).